A 621-amino-acid chain; its full sequence is MYRSMAILSSLRHAYSQISTRSYLSRSKVGFSSNLSSPLDSFAIVPSRFLWKFRTFSSKPDSMLQLVLENDWSKEVEEGLRKPDMSLTHETAIYVLRKLEKYPEKAYYFLDWVLRDSGLSPSTPLYSIMLRILVQQRSMKRFWMTLREMKQGGFYLDEDTYKTIYGELSKEKSKADAVAVAHFYERMLKENAMSVVAGEVSAVVTKGDWSCEVERELQEMKLVLSDNFVIRVLKELREHPLKALAFFHWVGGGGSSSGYQHSTVTYNAALRVLARPNSVAEFWSVVDEMKTAGYDMDLDTYIKVSRQFQKSRMMAETVKLYEYMMDGPFKPSIQDCSLLLRYLSGSPNPDLDLVFRVSRKYESTGKSLSKAVYDGIHRSLTSVGRFDEAEEITKAMRNAGYEPDNITYSQLVFGLCKAKRLEEARGVLDQMEAQGCFPDIKTWTILIQGHCKNNELDKALACFANMLEKGFDIDSNLLDVLIDGFVIHNKFEGASIFLMEMVKNANVKPWQSTYKLLIDKLLKIKKSEEALDLLQMMKKQNYPAYAEAFDGYLAKFGTLEDAKKFLDVLSSKDSPSFAAYFHVIEAFYREGRLTDAKNLLFICPHHFKTHPKISELFGAAA.

A chloroplast-targeting transit peptide spans 1–67; that stretch reads MYRSMAILSS…SKPDSMLQLV (67 aa). PPR repeat units lie at residues 122 to 156, 157 to 194, 262 to 296, 297 to 331, 332 to 368, 369 to 403, 404 to 438, 439 to 473, 474 to 509, and 510 to 544; these read STPLYSIMLRILVQQRSMKRFWMTLREMKQGGFYL, DEDTYKTIYGELSKEKSKADAVAVAHFYERMLKENAMS, STVTYNAALRVLARPNSVAEFWSVVDEMKTAGYDM, DLDTYIKVSRQFQKSRMMAETVKLYEYMMDGPFKP, SIQDCSLLLRYLSGSPNPDLDLVFRVSRKYESTGKSL, SKAVYDGIHRSLTSVGRFDEAEEITKAMRNAGYEP, DNITYSQLVFGLCKAKRLEEARGVLDQMEAQGCFP, DIKTWTILIQGHCKNNELDKALACFANMLEKGFDI, DSNLLDVLIDGFVIHNKFEGASIFLMEMVKNANVKP, and WQSTYKLLIDKLLKIKKSEEALDLLQMMKKQNYPA.

This sequence belongs to the PPR family. P subfamily.

Its subcellular location is the plastid. The protein localises to the chloroplast. The protein is Pentatricopeptide repeat-containing protein At3g48250, chloroplastic of Arabidopsis thaliana (Mouse-ear cress).